We begin with the raw amino-acid sequence, 606 residues long: UPF0329 protein ECU06_0090 (606 aa).

A disordered region spans residues lysine 317–asparagine 401. Positions glutamate 328–glycine 353 are enriched in basic and acidic residues. Over residues alanine 354 to serine 367 the composition is skewed to basic residues. The span at serine 381 to asparagine 401 shows a compositional bias: basic and acidic residues.

This sequence belongs to the UPF0329 family.

This Encephalitozoon cuniculi (strain GB-M1) (Microsporidian parasite) protein is UPF0329 protein ECU06_0090.